A 151-amino-acid chain; its full sequence is UPF0756 membrane protein Hore_21770 (151 aa).

The next 5 membrane-spanning stretches (helical) occupy residues 7 to 29, 49 to 69, 84 to 104, 110 to 130, and 131 to 151; these read LLII…GLLL, IEIG…LSPV, TVAI…LDLL, FILG…GIPV, and GPLM…IIKG.

Belongs to the UPF0756 family.

It localises to the cell membrane. This chain is UPF0756 membrane protein Hore_21770, found in Halothermothrix orenii (strain H 168 / OCM 544 / DSM 9562).